Consider the following 310-residue polypeptide: p-hydroxybenzoic acid efflux pump subunit AaeA (310 aa).

A helical membrane pass occupies residues 12–32 (AITVVLVVLAFIAIFRAWSFY).

Belongs to the membrane fusion protein (MFP) (TC 8.A.1) family.

It is found in the cell inner membrane. Its function is as follows. Forms an efflux pump with AaeB. The sequence is that of p-hydroxybenzoic acid efflux pump subunit AaeA from Cronobacter sakazakii (strain ATCC BAA-894) (Enterobacter sakazakii).